The primary structure comprises 184 residues: Probable S-adenosyl-L-methionine-binding protein PYRAB06630 (184 aa).

The region spanning 9–140 (YRPIGIIHSP…YVPEFDVREN (132 aa)) is the TsaA-like domain. S-adenosyl-L-methionine contacts are provided by residues 26–28 (PIQ), 65–66 (HR), Arg89, and 120–123 (LDGT).

Belongs to the tRNA methyltransferase O family.

This is Probable S-adenosyl-L-methionine-binding protein PYRAB06630 from Pyrococcus abyssi (strain GE5 / Orsay).